A 382-amino-acid chain; its full sequence is tRNA (guanine(26)-N(2))-dimethyltransferase (382 aa).

Positions 4-370 constitute a Trm1 methyltransferase domain; it reads TEVIEGKARL…REFSEILECV (367 aa). 5 residues coordinate S-adenosyl-L-methionine: R44, R69, D87, D113, and A114. C244, C247, C261, and C264 together coordinate Zn(2+).

The protein belongs to the class I-like SAM-binding methyltransferase superfamily. Trm1 family.

The enzyme catalyses guanosine(26) in tRNA + 2 S-adenosyl-L-methionine = N(2)-dimethylguanosine(26) in tRNA + 2 S-adenosyl-L-homocysteine + 2 H(+). Dimethylates a single guanine residue at position 26 of a number of tRNAs using S-adenosyl-L-methionine as donor of the methyl groups. The sequence is that of tRNA (guanine(26)-N(2))-dimethyltransferase from Metallosphaera sedula (strain ATCC 51363 / DSM 5348 / JCM 9185 / NBRC 15509 / TH2).